The following is a 146-amino-acid chain: MKLNELKPNEGSRRNRKRVGRGTSSGYGKTAGRGQKGQLARTGGKTRLGFEGGQMPLFRRMPKRGFKNVNRKEYAIINLNDLNRFDDGSEVTIDTLKSSGLVKKELAGVKLLANGELKVKLTVKVNKVSEAAKKAVEAAGGTVEVI.

A compositionally biased stretch (basic and acidic residues) spans 1-13 (MKLNELKPNEGSR). The disordered stretch occupies residues 1-54 (MKLNELKPNEGSRRNRKRVGRGTSSGYGKTAGRGQKGQLARTGGKTRLGFEGGQ). Residues 23-35 (TSSGYGKTAGRGQ) show a composition bias toward gly residues.

It belongs to the universal ribosomal protein uL15 family. Part of the 50S ribosomal subunit.

Its function is as follows. Binds to the 23S rRNA. The protein is Large ribosomal subunit protein uL15 of Lactobacillus gasseri (strain ATCC 33323 / DSM 20243 / BCRC 14619 / CIP 102991 / JCM 1131 / KCTC 3163 / NCIMB 11718 / NCTC 13722 / AM63).